Consider the following 696-residue polypeptide: Interleukin-1 receptor accessory protein-like 1 (696 aa).

The first 18 residues, 1–18 (MKAPIPHLILLYATFTQS), serve as a signal peptide directing secretion. In terms of domain architecture, Ig-like 1 spans 19–134 (LKVVTKRGSA…YCMKVSISLT (116 aa)). Residues 19–357 (LKVVTKRGSA…LLHKRELMYT (339 aa)) are Extracellular-facing. 2 disulfides stabilise this stretch: Cys-31/Cys-126 and Cys-53/Cys-118. N-linked (GlcNAc...) asparagine glycans are attached at residues Asn-63, Asn-122, and Asn-138. 2 cysteine pairs are disulfide-bonded: Cys-143–Cys-185 and Cys-164–Cys-216. Ig-like domains follow at residues 143 to 232 (CYNS…TELT) and 242 to 350 (PKLL…VLLH). Residues Asn-213, Asn-264, and Asn-331 are each glycosylated (N-linked (GlcNAc...) asparagine). An intrachain disulfide couples Cys-267 to Cys-334. The helical transmembrane segment at 358–378 (VELAGGLGAILLLLVCLVTIY) threads the bilayer. The Cytoplasmic portion of the chain corresponds to 379 to 696 (KCYKIEIMLF…RETSISSVIW (318 aa)). One can recognise a TIR domain in the interval 403–559 (KDYDAYLSYT…KFWKRLQYEM (157 aa)). Glu-491 is an active-site residue. Residues 549–644 (SKFWKRLQYE…TGTLPLTSIG (96 aa)) are interaction with NCS1. A disordered region spans residues 659 to 680 (GQRPQTKSSREQNPDEAHTNSA). The span at 666 to 676 (SSREQNPDEAH) shows a compositional bias: basic and acidic residues.

The protein belongs to the interleukin-1 receptor family. In terms of assembly, homodimer. Interacts (calcium-independent) with NCS1/FREQ. Interacts (via the first immunoglobilin domain) with PTPRD (via the second immunoglobilin domain); this interaction is PTPRD-splicing-dependent and induces pre- and post-synaptic differentiation of neurons and is required for IL1RAPL1-mediated synapse formation.

It localises to the cell membrane. The protein resides in the cytoplasm. It is found in the cell projection. Its subcellular location is the axon. The protein localises to the dendrite. It catalyses the reaction NAD(+) + H2O = ADP-D-ribose + nicotinamide + H(+). Functionally, may regulate secretion and presynaptic differentiation through inhibition of the activity of N-type voltage-gated calcium channel. May activate the MAP kinase JNK. Plays a role in neurite outgrowth. During dendritic spine formation can bidirectionally induce pre- and post-synaptic differentiation of neurons by trans-synaptically binding to PTPRD. This chain is Interleukin-1 receptor accessory protein-like 1 (IL1RAPL1), found in Pongo pygmaeus (Bornean orangutan).